The following is a 389-amino-acid chain: Curcumin synthase 1 (389 aa).

Cysteine 164 is an active-site residue.

This sequence belongs to the thiolase-like superfamily. Chalcone/stilbene synthases family. In terms of assembly, homodimer. Expressed in both the leaf and rhizome, with higher expression in the rhizome.

It carries out the reaction (E)-feruloylacetyl-CoA + (E)-feruloyl-CoA + H2O = curcumin + CO2 + 2 CoA. It participates in secondary metabolite biosynthesis; flavonoid biosynthesis. Its function is as follows. Catalyzes the synthesis of curcumin by condensing feruloyl-CoA with a diketide-CoA in the curcuminoid biosynthesis. This chain is Curcumin synthase 1 (CURS1), found in Curcuma longa (Turmeric).